Consider the following 484-residue polypeptide: NADH-quinone oxidoreductase subunit N (484 aa).

14 helical membrane-spanning segments follow: residues 11 to 31, 42 to 62, 79 to 98, 113 to 133, 134 to 154, 167 to 187, 211 to 231, 248 to 268, 279 to 299, 313 to 333, 335 to 355, 378 to 398, 408 to 428, and 457 to 477; these read SLWI…VLLI, VTYY…FNLI, MASV…MVYS, FVLV…YSLL, TLYL…AIAR, FVLG…IYGI, LIIN…LGAV, VTLF…VRIL, WSDL…VVAL, ISHV…GYGA, AFYM…IILL, FALM…LVGF, VVSA…VISA, and LVLS…DFWM.

Belongs to the complex I subunit 2 family. In terms of assembly, NDH-1 is composed of 14 different subunits. Subunits NuoA, H, J, K, L, M, N constitute the membrane sector of the complex.

The protein localises to the cell inner membrane. The catalysed reaction is a quinone + NADH + 5 H(+)(in) = a quinol + NAD(+) + 4 H(+)(out). Its function is as follows. NDH-1 shuttles electrons from NADH, via FMN and iron-sulfur (Fe-S) centers, to quinones in the respiratory chain. The immediate electron acceptor for the enzyme in this species is believed to be ubiquinone. Couples the redox reaction to proton translocation (for every two electrons transferred, four hydrogen ions are translocated across the cytoplasmic membrane), and thus conserves the redox energy in a proton gradient. In Ruthia magnifica subsp. Calyptogena magnifica, this protein is NADH-quinone oxidoreductase subunit N.